The primary structure comprises 180 residues: Large ribosomal subunit protein bL17 (180 aa).

The segment at 134–180 (AQAKAKKAAAMPTEESEAKPAEEGDVVGASEPDAKAPEEPPTEAPEN) is disordered.

This sequence belongs to the bacterial ribosomal protein bL17 family. Part of the 50S ribosomal subunit. Contacts protein L32.

In Mycobacterium tuberculosis (strain CDC 1551 / Oshkosh), this protein is Large ribosomal subunit protein bL17.